Consider the following 551-residue polypeptide: Glucans biosynthesis protein D (551 aa).

The segment at residues 1–32 (MDRRRFIKGSMAMAAVCGTSGIASLFSQAAFA) is a signal peptide (tat-type signal).

This sequence belongs to the OpgD/OpgG family. Predicted to be exported by the Tat system. The position of the signal peptide cleavage has not been experimentally proven.

The protein localises to the periplasm. Its pathway is glycan metabolism; osmoregulated periplasmic glucan (OPG) biosynthesis. In terms of biological role, probably involved in the control of the structural glucose backbone of osmoregulated periplasmic glucans (OPGs). The chain is Glucans biosynthesis protein D from Escherichia coli O139:H28 (strain E24377A / ETEC).